Reading from the N-terminus, the 824-residue chain is AMP deaminase 2 (824 aa).

The disordered stretch occupies residues 1–43 (MASYPGPGKSKAKYPFKKRASLQASAAAPEARSGLGASPLQSA). The segment covering 10–20 (SKAKYPFKKRA) has biased composition (basic residues). Ser21 carries the post-translational modification Phosphoserine. A compositionally biased stretch (low complexity) spans 21–33 (SLQASAAAPEARS). Arg44 carries the post-translational modification Omega-N-methylarginine. A phosphoserine mark is found at Ser45, Ser63, and Ser79. At Tyr90 the chain carries Phosphotyrosine. Phosphoserine occurs at positions 96 and 113. A Phosphothreonine modification is found at Thr133. Residues Ser135 and Ser137 each carry the phosphoserine modification. The Zn(2+) site is built by His364 and His366. Residues His366 and 435–440 (KFNAKY) contribute to the substrate site. His633 is a binding site for Zn(2+). Glu636 is a binding site for substrate. His655 acts as the Proton acceptor in catalysis. Asp710 serves as a coordination point for Zn(2+). 711-714 (DPLQ) contacts substrate.

This sequence belongs to the metallo-dependent hydrolases superfamily. Adenosine and AMP deaminases family. As to quaternary structure, homotetramer. Zn(2+) is required as a cofactor.

It carries out the reaction AMP + H2O + H(+) = IMP + NH4(+). The protein operates within purine metabolism; IMP biosynthesis via salvage pathway; IMP from AMP: step 1/1. In terms of biological role, AMP deaminase plays a critical role in energy metabolism. Catalyzes the deamination of AMP to IMP and plays an important role in the purine nucleotide cycle. The sequence is that of AMP deaminase 2 from Rattus norvegicus (Rat).